The chain runs to 905 residues: MKGCSSYLMYSFGGLLSLWILLVSSTNQCTVRYNVADCSHLKLTHIPDDLPSNITVLNLTHNQLRRLPPTNFTRYSQLAILDAGFNSISKLEPELCQILPLLKVLNLQHNELSQISDQTFVFCTNLTELDLMSNSIHKIKSNPFKNQKNLIKLDLSHNGLSSTKLGTGVQLENLQELLLAKNKILALRSEELEFLGNSSLRKLDLSSNPLKEFSPGCFQTIGKLFALLLNNAQLNPHLTEKLCWELSNTSIQNLSLANNQLLATSESTFSGLKWTNLTQLDLSYNNLHDVGNGSFSYLPSLRYLSLEYNNIQRLSPRSFYGLSNLRYLSLKRAFTKQSVSLASHPNIDDFSFQWLKYLEYLNMDDNNIPSTKSNTFTGLVSLKYLSLSKTFTSLQTLTNETFVSLAHSPLLTLNLTKNHISKIANGTFSWLGQLRILDLGLNEIEQKLSGQEWRGLRNIFEIYLSYNKYLQLSTSSFALVPSLQRLMLRRVALKNVDISPSPFRPLRNLTILDLSNNNIANINEDLLEGLENLEILDFQHNNLARLWKRANPGGPVNFLKGLSHLHILNLESNGLDEIPVGVFKNLFELKSINLGLNNLNKLEPFIFDDQTSLRSLNLQKNLITSVEKDVFGPPFQNLNSLDMRFNPFDCTCESISWFVNWINQTHTNISELSTHYLCNTPHHYYGFPLKLFDTSSCKDSAPFELLFIISTSMLLVFILVVLLIHIEGWRISFYWNVSVHRILGFKEIDTQAEQFEYTAYIIHAHKDRDWVWEHFSPMEEQDQSLKFCLEERDFEAGVLGLEAIVNSIKRSRKIIFVITHHLLKDPLCRRFKVHHAVQQAIEQNLDSIILIFLQNIPDYKLNHALCLRRGMFKSHCILNWPVQKERINAFHHKLQVALGSRNSAH.

An N-terminal signal peptide occupies residues 1-25 (MKGCSSYLMYSFGGLLSLWILLVSS). The LRRNT domain occupies 26–52 (TNQCTVRYNVADCSHLKLTHIPDDLPS). The Lumenal segment spans residues 26–705 (TNQCTVRYNV…SCKDSAPFEL (680 aa)). The cysteines at positions 29 and 38 are disulfide-linked. N-linked (GlcNAc...) asparagine glycosylation is found at N53, N58, and N71. 6 LRR repeats span residues 53–74 (NITVLNLTHNQLRRLPPTNFTR), 77–98 (QLAILDAGFNSISKLEPELCQI), 101–122 (LLKVLNLQHNELSQISDQTFVF), 125–146 (NLTELDLMSNSIHKIKSNPFKN), 149–170 (NLIKLDLSHNGLSSTKLGTGVQ), and 173–196 (NLQELLLAKNKILALRSEELEFLG). An intrachain disulfide couples C96 to C123. A glycan (N-linked (GlcNAc...) asparagine) is linked at N125. N197 carries N-linked (GlcNAc...) asparagine glycosylation. An LRR 7 repeat occupies 199–220 (SLRKLDLSSNPLKEFSPGCFQT). 4 N-linked (GlcNAc...) asparagine glycosylation sites follow: N248, N253, N276, and N292. LRR repeat units follow at residues 250–271 (SIQNLSLANNQLLATSESTFSG), 276–297 (NLTQLDLSYNNLHDVGNGSFSY), 300–321 (SLRYLSLEYNNIQRLSPRSFYG), 324–345 (NLRYLSLKRAFTKQSVSLASHP), 357–378 (YLEYLNMDDNNIPSTKSNTFTG), 381–401 (SLKYLSLSKTFTSLQTLTNET), 409–430 (PLLTLNLTKNHISKIANGTFSW), 433–454 (QLRILDLGLNEIEQKLSGQEWR), 458–479 (NIFEIYLSYNKYLQLSTSSFAL), 482–502 (SLQRLMLRRVALKNVDISPSP), 508–529 (NLTILDLSNNNIANINEDLLEG), 532–553 (NLEILDFQHNNLARLWKRANPG), 564–585 (HLHILNLESNGLDEIPVGVFKN), 588–609 (ELKSINLGLNNLNKLEPFIFDD), and 612–633 (SLRSLNLQKNLITSVEKDVFGP). N-linked (GlcNAc...) asparagine glycosylation is found at N399, N414, and N425. A glycan (N-linked (GlcNAc...) asparagine) is linked at N508. The LRRCT domain maps to 646–699 (NPFDCTCESISWFVNWINQTHTNISELSTHYLCNTPHHYYGFPLKLFDTSSCKD). 2 disulfides stabilise this stretch: C650-C678 and C652-C697. N-linked (GlcNAc...) asparagine glycans are attached at residues N663 and N668. The chain crosses the membrane as a helical span at residues 706–726 (LFIISTSMLLVFILVVLLIHI). Over 727–905 (EGWRISFYWN…VALGSRNSAH (179 aa)) the chain is Cytoplasmic. A TIR domain is found at 755 to 898 (FEYTAYIIHA…AFHHKLQVAL (144 aa)). Y760 is modified (phosphotyrosine). Residues K766, K813, and K832 each participate in a glycyl lysine isopeptide (Lys-Gly) (interchain with G-Cter in ubiquitin) cross-link. The residue at position 859 (Y859) is a Phosphotyrosine.

This sequence belongs to the Toll-like receptor family. Monomer and homodimer; dimerization is triggered by ligand-binding, the signaling unit is composed of one ds-RNA of around 40 bp and two TLR3 molecules, and lateral clustering of signaling units along the length of the ds-RNA ligand is required for TLR3 signal transduction. Interacts (via transmembrane domain) with UNC93B1; the interaction is required for transport from the ER to the endosomes. Interacts with SRC; upon binding of double-stranded RNA. Interacts with TICAM1 (via the TIR domain) in response to poly(I:C) and this interaction is enhanced in the presence of WDFY1. The tyrosine-phosphorylated form (via TIR domain) interacts with WDFY1 (via WD repeat 2) in response to poly(I:C). Ubiquitinated by RNF170 at Lys-766 via 'Lys-48'-linked ubiquitin chains; leading to TLR3 proteasomal degradation. TLR3 signaling requires a proteolytic cleavage mediated by cathepsins CTSB and CTSH, the cleavage occurs between amino acids 252 and 346. The cleaved form of TLR3 is the predominant form found in endosomes. In terms of processing, ubiquitinated by TRIM3; leading to recognition and sorting of polyubiquitinated TLR3 by the ESCRT complexes. Ubiquitinated by ZNRF1 via 'Lys-63'-linked ubiquitin chains; leading to TLR3 lysosomal trafficking and degradation. Highly expressed in lung. After intraperitoneal injection of lipopolysaccharide, highly expressed in brain, heart, kidney, liver, lung and spleen.

The protein resides in the endoplasmic reticulum membrane. The protein localises to the endosome membrane. Its subcellular location is the early endosome. Functionally, key component of innate and adaptive immunity. TLRs (Toll-like receptors) control host immune response against pathogens through recognition of molecular patterns specific to microorganisms. TLR3 is a nucleotide-sensing TLR which is activated by double-stranded RNA, a sign of viral infection. Acts via the adapter TRIF/TICAM1, leading to NF-kappa-B activation, IRF3 nuclear translocation, cytokine secretion and the inflammatory response. In Mus musculus (Mouse), this protein is Toll-like receptor 3.